Here is a 177-residue protein sequence, read N- to C-terminus: MSTHKWYAIQTYAGSEMAVKRAIENLVKDNGIEEQLKEIVVPTEDVIEFKNGKEKISERSLYSGYVFALLDLNTELWHRIQSLPKVGRFIGESKKPTPLTEKDINLILEKVHNRAAPKPKISFEEGENVRITEGPFANFTAIVEEYDMVRGLLKLNVSIFGRSTPVEILYSQVEKII.

One can recognise a KOW domain in the interval 125–150 (EGENVRITEGPFANFTAIVEEYDMVR).

Belongs to the NusG family.

Its function is as follows. Participates in transcription elongation, termination and antitermination. The protein is Transcription termination/antitermination protein NusG of Campylobacter jejuni subsp. jejuni serotype O:2 (strain ATCC 700819 / NCTC 11168).